Reading from the N-terminus, the 289-residue chain is 4-hydroxybenzoate octaprenyltransferase (289 aa).

7 consecutive transmembrane segments (helical) span residues 33–53 (LWAL…AVFV), 99–119 (LFVV…TMTI), 141–161 (LPQV…FAAV), 163–183 (ESVP…AVAY), 213–233 (LIIG…GRLN), 238–258 (EFYW…KLIV), and 268–288 (AFLN…MSYW).

It belongs to the UbiA prenyltransferase family. Mg(2+) serves as cofactor.

It localises to the cell inner membrane. It catalyses the reaction all-trans-octaprenyl diphosphate + 4-hydroxybenzoate = 4-hydroxy-3-(all-trans-octaprenyl)benzoate + diphosphate. The protein operates within cofactor biosynthesis; ubiquinone biosynthesis. Functionally, catalyzes the prenylation of para-hydroxybenzoate (PHB) with an all-trans polyprenyl group. Mediates the second step in the final reaction sequence of ubiquinone-8 (UQ-8) biosynthesis, which is the condensation of the polyisoprenoid side chain with PHB, generating the first membrane-bound Q intermediate 3-octaprenyl-4-hydroxybenzoate. The polypeptide is 4-hydroxybenzoate octaprenyltransferase (Enterobacter sp. (strain 638)).